A 513-amino-acid polypeptide reads, in one-letter code: Bifunctional purine biosynthesis protein PurH (513 aa).

The MGS-like domain maps to 1-145; it reads MNKRAIISVY…KNFKYTTVIV (145 aa).

This sequence belongs to the PurH family.

It carries out the reaction (6R)-10-formyltetrahydrofolate + 5-amino-1-(5-phospho-beta-D-ribosyl)imidazole-4-carboxamide = 5-formamido-1-(5-phospho-D-ribosyl)imidazole-4-carboxamide + (6S)-5,6,7,8-tetrahydrofolate. It catalyses the reaction IMP + H2O = 5-formamido-1-(5-phospho-D-ribosyl)imidazole-4-carboxamide. The protein operates within purine metabolism; IMP biosynthesis via de novo pathway; 5-formamido-1-(5-phospho-D-ribosyl)imidazole-4-carboxamide from 5-amino-1-(5-phospho-D-ribosyl)imidazole-4-carboxamide (10-formyl THF route): step 1/1. Its pathway is purine metabolism; IMP biosynthesis via de novo pathway; IMP from 5-formamido-1-(5-phospho-D-ribosyl)imidazole-4-carboxamide: step 1/1. In Caldicellulosiruptor bescii (strain ATCC BAA-1888 / DSM 6725 / KCTC 15123 / Z-1320) (Anaerocellum thermophilum), this protein is Bifunctional purine biosynthesis protein PurH.